Reading from the N-terminus, the 615-residue chain is Sodium-dependent neutral amino acid transporter B(0)AT3 (615 aa).

The Cytoplasmic segment spans residues 1 to 26 (MAQASGMDPLVDIEDERPKWDNKLQY). The chain crosses the membrane as a helical span at residues 27–47 (LLSCIGFAVGLGNIWRFPYLC). Topologically, residues 48-52 (HTHGG) are extracellular. The helical transmembrane segment at 53-73 (GAFLIPYFIALVFEGIPLFYI) threads the bilayer. Residues 74-105 (ELAIGQRLRRGSIGVWKTISPYLGGVGLGCFS) are Cytoplasmic-facing. The helical transmembrane segment at 106-126 (VSFLVSLYYNTILLWVLWFFL) threads the bilayer. Residues 127–177 (NSFQHPLPWSTCPLDLNRTGFVQECQSSGTVSYFWYRQTLNITSDISNTGT) are Extracellular-facing. 2 N-linked (GlcNAc...) asparagine glycosylation sites follow: Asn143 and Asn167. The helical transmembrane segment at 178–198 (IQWKLFLCLVACWTTVYLCVI) threads the bilayer. The Cytoplasmic portion of the chain corresponds to 199–206 (RGIESTGK). A helical membrane pass occupies residues 207 to 227 (VIYFTALFPYLVLTIFLIRGL). Over 228-255 (TLPGATEGLTYLFTPNMKILQNSRVWLD) the chain is Extracellular. The chain crosses the membrane as a helical span at residues 256–276 (AATQIFFSLSLAFGGHIAFAS). The Cytoplasmic portion of the chain corresponds to 277 to 290 (YNQPRNNCEKDAVT). Residues 291–311 (IALVNSMTSLYASITIFSIMG) form a helical membrane-spanning segment. At 312-397 (FKASNDYGRC…FTEAVLHMPG (86 aa)) the chain is on the extracellular side. Residue Asn353 is glycosylated (N-linked (GlcNAc...) asparagine). The chain crosses the membrane as a helical span at residues 398 to 418 (ASVWSVLFFGMLFTLGLSSMF). Residues 419 to 442 (GNMEGVITPLFDMGILPKGVPKET) lie on the Cytoplasmic side of the membrane. Residues 443 to 463 (MTGVVCFICFLSAICFTLQSG) traverse the membrane as a helical segment. The Extracellular segment spans residues 464-472 (SYWLEIFDS). A helical membrane pass occupies residues 473-493 (FAASLNLIIFAFMEVVGVIHV). The Cytoplasmic segment spans residues 494 to 520 (YGIKRFCDDIEWMTGRRPSLYWQVTWR). Residues 521–541 (VVSPMLLFGIFLSYIVLLAQS) traverse the membrane as a helical segment. The Extracellular segment spans residues 542-571 (SPSYKAWNPQYEHFPSREEKLYPGWVQVTC). The chain crosses the membrane as a helical span at residues 572 to 592 (VLLSFLPSLWVPGIALAQLLF). Residues 593–615 (QYRQRWKNTHLESALKPQESRGC) are Cytoplasmic-facing.

This sequence belongs to the sodium:neurotransmitter symporter (SNF) (TC 2.A.22) family. SLC6A18 subfamily. In terms of assembly, interacts with CLTRN; this interaction regulates the trafficking of SLC6A18 to the cell membrane and its activity. In terms of tissue distribution, kidney-specific expression.

Its subcellular location is the apical cell membrane. It localises to the cell membrane. It carries out the reaction L-alanine(out) + chloride(out) + 2 Na(+)(out) = L-alanine(in) + chloride(in) + 2 Na(+)(in). It catalyses the reaction glycine(out) + chloride(out) + 2 Na(+)(out) = glycine(in) + chloride(in) + 2 Na(+)(in). The enzyme catalyses L-methionine(out) + chloride(out) + 2 Na(+)(out) = L-methionine(in) + chloride(in) + 2 Na(+)(in). The catalysed reaction is L-valine(out) + chloride(out) + 2 Na(+)(out) = L-valine(in) + chloride(in) + 2 Na(+)(in). It carries out the reaction L-isoleucine(out) + chloride(out) + 2 Na(+)(out) = L-isoleucine(in) + chloride(in) + 2 Na(+)(in). It catalyses the reaction L-serine(out) + chloride(out) + 2 Na(+)(out) = L-serine(in) + chloride(in) + 2 Na(+)(in). The enzyme catalyses L-leucine(out) + chloride(out) + 2 Na(+)(out) = L-leucine(in) + chloride(in) + 2 Na(+)(in). Symporter that transports one amino acid molecule together with two sodium and one chloride ions in kidneys and plays a role in the neutral amino acids reabsorption. Preferentially transports neutral amino acids such as L-glycine and L-alanine but also other neutral amino acids. Required CLTRN for cell surface expression and for its amino acid transporter activity. The transport mechanism is pH-independent. This Rattus norvegicus (Rat) protein is Sodium-dependent neutral amino acid transporter B(0)AT3.